The primary structure comprises 105 residues: Large ribosomal subunit protein eL36 (105 aa).

This sequence belongs to the eukaryotic ribosomal protein eL36 family. Component of the large ribosomal subunit.

It localises to the cytoplasm. It is found in the cytosol. In terms of biological role, component of the large ribosomal subunit. The ribosome is a large ribonucleoprotein complex responsible for the synthesis of proteins in the cell. The protein is Large ribosomal subunit protein eL36 (rpl36) of Danio rerio (Zebrafish).